The following is a 133-amino-acid chain: Nucleoside diphosphate kinase (133 aa).

The ATP site is built by lysine 9, phenylalanine 57, arginine 85, threonine 91, arginine 102, and asparagine 112. Catalysis depends on histidine 115, which acts as the Pros-phosphohistidine intermediate.

It belongs to the NDK family. As to quaternary structure, homotetramer. Mg(2+) serves as cofactor.

The protein resides in the cytoplasm. It catalyses the reaction a 2'-deoxyribonucleoside 5'-diphosphate + ATP = a 2'-deoxyribonucleoside 5'-triphosphate + ADP. It carries out the reaction a ribonucleoside 5'-diphosphate + ATP = a ribonucleoside 5'-triphosphate + ADP. Functionally, major role in the synthesis of nucleoside triphosphates other than ATP. The ATP gamma phosphate is transferred to the NDP beta phosphate via a ping-pong mechanism, using a phosphorylated active-site intermediate. The chain is Nucleoside diphosphate kinase from Rubrobacter xylanophilus (strain DSM 9941 / JCM 11954 / NBRC 16129 / PRD-1).